Reading from the N-terminus, the 353-residue chain is MCALQYLRPDLLYLKPYDAVPAPAADKLDANEFPLDWPAGFKQKLSLLWEKGIPSNRYPDAHHRGLKQAIAAYAGAEPEQISLGNGSDELIRSLLIATCLGGRGGILVAEPTFSMYAILAQSLGIPVVRVPRDPETFALDLERCQQALREHPIRVVCLVDPNSPTGNGLTAAEWEWVEGLPEEILVILDEAYFEFSRHTALPKLAEHPNWVILRTFSKAFRLAAHRVGYAVGHPQLMQVLDGIRLPYNLTALSQWAVQMALEHAEELLADVTLICQEREALYQALQELPGVRVWPSQANFLYFRVAGWDPQELQRAWQELGTGVRYTGGGLRLTVGTPEENRRALERLRQILQ.

An N6-(pyridoxal phosphate)lysine modification is found at lysine 218.

The protein belongs to the class-II pyridoxal-phosphate-dependent aminotransferase family. Histidinol-phosphate aminotransferase subfamily. Homodimer. It depends on pyridoxal 5'-phosphate as a cofactor.

It catalyses the reaction L-histidinol phosphate + 2-oxoglutarate = 3-(imidazol-4-yl)-2-oxopropyl phosphate + L-glutamate. Its pathway is amino-acid biosynthesis; L-histidine biosynthesis; L-histidine from 5-phospho-alpha-D-ribose 1-diphosphate: step 7/9. The chain is Histidinol-phosphate aminotransferase from Synechococcus sp. (strain JA-2-3B'a(2-13)) (Cyanobacteria bacterium Yellowstone B-Prime).